Consider the following 342-residue polypeptide: Ribosomal RNA small subunit methyltransferase C (342 aa).

The protein belongs to the methyltransferase superfamily. RsmC family. Monomer.

The protein localises to the cytoplasm. It carries out the reaction guanosine(1207) in 16S rRNA + S-adenosyl-L-methionine = N(2)-methylguanosine(1207) in 16S rRNA + S-adenosyl-L-homocysteine + H(+). Functionally, specifically methylates the guanine in position 1207 of 16S rRNA in the 30S particle. This chain is Ribosomal RNA small subunit methyltransferase C, found in Salmonella paratyphi A (strain ATCC 9150 / SARB42).